The following is a 156-amino-acid chain: Ribonuclease pancreatic (156 aa).

The first 28 residues, 1 to 28 (MALEKSLVLLPLFVLMLLVLGWVQPSLG), serve as a signal peptide directing secretion. Substrate contacts are provided by Lys35 and Arg38. Residue His40 is the Proton acceptor of the active site. N-linked (GlcNAc...) asparagine glycans are attached at residues Asn50 and Asn62. Cystine bridges form between Cys54-Cys112, Cys68-Cys123, Cys86-Cys138, and Cys93-Cys100. Substrate is bound by residues 69–73 (KPVNT) and Lys94. Asn104 is a glycosylation site (N-linked (GlcNAc...) asparagine). Arg113 is a substrate binding site. Asn116 carries an N-linked (GlcNAc...) asparagine glycan. The active-site Proton donor is His147.

This sequence belongs to the pancreatic ribonuclease family. As to quaternary structure, monomer. Interacts with and forms tight 1:1 complexes with RNH1. Dimerization of two such complexes may occur. Interaction with RNH1 inhibits this protein.

It localises to the secreted. It catalyses the reaction an [RNA] containing cytidine + H2O = an [RNA]-3'-cytidine-3'-phosphate + a 5'-hydroxy-ribonucleotide-3'-[RNA].. It carries out the reaction an [RNA] containing uridine + H2O = an [RNA]-3'-uridine-3'-phosphate + a 5'-hydroxy-ribonucleotide-3'-[RNA].. Its function is as follows. Endonuclease that catalyzes the cleavage of RNA on the 3' side of pyrimidine nucleotides. Acts on single-stranded and double-stranded RNA. The sequence is that of Ribonuclease pancreatic (RNASE1) from Nomascus leucogenys (Northern white-cheeked gibbon).